A 344-amino-acid polypeptide reads, in one-letter code: FCS-Like Zinc finger 10 (344 aa).

Residues 270 to 314 form an FLZ-type zinc finger; the sequence is DFLSFCYGCSKKLGMGEDIYMYSGYKAFCSSECRSKEIDLDEEME. Residues 309-320 show a composition bias toward acidic residues; sequence LDEEMEDGDEEE. The segment at 309–344 is disordered; that stretch reads LDEEMEDGDEEEAIKSVSSSDKESKKKSNGVFFTVG.

This sequence belongs to the FLZ family. Interacts with KIN10 and KIN11 via its FLZ-type zinc finger domain. Interacts with KINB1, KINB2 and KINB3 via its N-terminal part. Forms homodimer and heterodimer with FLZ2 and FLZ12 in vitro. In terms of tissue distribution, early expressed in hypocotyl and cotyledon and preferentially in the stelar region of the shoot and root. Later expressed in root-shoot junction, lateral root, old or senescing leaves and in pistil and pollen of flower buds or open flowers.

It is found in the cytoplasm. The protein localises to the nucleus. It localises to the endoplasmic reticulum. May act as an adapter to facilitate the interaction of SnRK1 complex with effector proteins, conferring tissue- and stimulus-type specific differences in the SnRK1 regulation pathway. Negatively regulates KIN10 leading to a repression of the SnRK1 signaling pathway. This is FCS-Like Zinc finger 10 from Arabidopsis thaliana (Mouse-ear cress).